The sequence spans 167 residues: Homing endonuclease I-ApeII (167 aa).

This sequence belongs to the LAGLIDADG endonuclease family.

In terms of biological role, endonuclease involved in rRNA intron I-gamma homing. The polypeptide is Homing endonuclease I-ApeII (apeII) (Aeropyrum pernix (strain ATCC 700893 / DSM 11879 / JCM 9820 / NBRC 100138 / K1)).